We begin with the raw amino-acid sequence, 21 residues long: Ferredoxin (21 aa).

One can recognise a 4Fe-4S ferredoxin-type domain in the interval 2-21; it reads KVKVDADACIGCGVCVELCP. Cys-10, Cys-13, and Cys-16 together coordinate [4Fe-4S] cluster.

Monomer. [4Fe-4S] cluster is required as a cofactor.

In terms of biological role, ferredoxins are iron-sulfur proteins that transfer electrons in a wide variety of metabolic reactions. This chain is Ferredoxin (fdxA), found in Pyrococcus woesei.